We begin with the raw amino-acid sequence, 323 residues long: Mediator of RNA polymerase II transcription subunit 4 (323 aa).

The interval methionine 1–threonine 36 is disordered. A compositionally biased stretch (polar residues) spans phenylalanine 11–threonine 36. Residues methionine 79–leucine 167 are a coiled coil. Composition is skewed to basic and acidic residues over residues histidine 241–histidine 262 and aspartate 282–glutamine 303. The segment at histidine 241 to aspartate 323 is disordered.

This sequence belongs to the Mediator complex subunit 4 family. As to quaternary structure, component of the Mediator complex.

It localises to the nucleus. In terms of biological role, component of the Mediator complex, a coactivator involved in the regulated transcription of nearly all RNA polymerase II-dependent genes. Mediator functions as a bridge to convey information from gene-specific regulatory proteins to the basal RNA polymerase II transcription machinery. Mediator is recruited to promoters by direct interactions with regulatory proteins and serves as a scaffold for the assembly of a functional preinitiation complex with RNA polymerase II and the general transcription factors. This is Mediator of RNA polymerase II transcription subunit 4 (MED4) from Candida albicans (strain SC5314 / ATCC MYA-2876) (Yeast).